The primary structure comprises 851 residues: Oligopeptide transport ATP-binding protein OppF (851 aa).

The ABC transporter domain maps to 14 to 788 (VKALSMLFKV…PVHPYTRSLI (775 aa)). 48–55 (GESGSGKS) is an ATP binding site.

This sequence belongs to the ABC transporter superfamily. The complex is composed of two ATP-binding proteins (OppD and OppF), two transmembrane proteins (OppB and OppC) and a solute-binding protein (OppA).

Its subcellular location is the cell membrane. It carries out the reaction a [peptide](out) + ATP + H2O = a [peptide](in) + ADP + phosphate + H(+). In terms of biological role, part of the ABC transporter complex OppABCDF involved in the uptake of oligopeptides. Probably responsible for energy coupling to the transport system. In Mycoplasma pneumoniae (strain ATCC 29342 / M129 / Subtype 1) (Mycoplasmoides pneumoniae), this protein is Oligopeptide transport ATP-binding protein OppF (oppF).